Here is a 136-residue protein sequence, read N- to C-terminus: Galectin-7 (136 aa).

A Galectin domain is found at 6–136 (HKTPLPQGVR…DVQLHSVKIF (131 aa)). 70–76 (WGREERG) is a binding site for a beta-D-galactoside.

As to quaternary structure, monomer.

It localises to the cytoplasm. The protein resides in the nucleus. The protein localises to the secreted. Could be involved in cell-cell and/or cell-matrix interactions necessary for normal growth control. Pro-apoptotic protein that functions intracellularly upstream of JNK activation and cytochrome c release. The polypeptide is Galectin-7 (Lgals7) (Rattus norvegicus (Rat)).